The sequence spans 625 residues: Tumor necrosis factor receptor superfamily member 11A (625 aa).

An N-terminal signal peptide occupies residues 1–30 (MAPRARRRRQLPAPLLALCVLLVPLQVTLQ). Topologically, residues 31–214 (VTPPCTQERH…PKEAQAYLPS (184 aa)) are extracellular. Disulfide bonds link C35–C47, C48–C61, C51–C69, C72–C87, C93–C113, C115–C128, C125–C127, C134–C152, and C155–C170. TNFR-Cys repeat units lie at residues 35–69 (CTQE…DSVC), 72–113 (CGPD…PRRC), 115–152 (CTAG…DTVC), and 155–195 (CLLG…DVVC). N106 carries an N-linked (GlcNAc...) asparagine glycan. Residues C134, A135, F138, S161, and V163 each coordinate Na(+). An N-linked (GlcNAc...) asparagine glycan is attached at N175. The cysteines at positions 176 and 195 are disulfide-linked. A helical membrane pass occupies residues 215–234 (LIVLLLFISVVVVAAIIFGV). Topologically, residues 235–625 (YYRKGGKALT…HTQGSGQCAE (391 aa)) are cytoplasmic. Disordered stretches follow at residues 331 to 356 (TQGD…STGS), 388 to 413 (GTES…MPVS), and 479 to 524 (SMAE…FISS). Over residues 499 to 511 (SGSSPSDQPPASG) the composition is skewed to low complexity. Polar residues predominate over residues 512-524 (NVTGNSNSTFISS). The segment at 532 to 537 (GDIIVV) is required for interaction with EEIG1 and osteoclast differentiation. The disordered stretch occupies residues 542-625 (TSQEGPGSAE…HTQGSGQCAE (84 aa)). Residues 543-558 (SQEGPGSAEPESEPVG) show a composition bias toward low complexity. Residues 561–571 (VQEETLAHRDS) are compositionally biased toward basic and acidic residues. Phosphoserine is present on S571. Residues 603–625 (RPVQEQGGAQTSLHTQGSGQCAE) show a composition bias toward polar residues.

As to quaternary structure, binds to the clefts between the subunits of the TNFSF11 ligand trimer to form a heterohexamer. Part of a complex composed of EEIG1, TNFRSF11A/RANK, PLCG2, GAB2, TEC and BTK; complex formation increases in the presence of TNFSF11/RANKL. Interacts with TRAF1, TRAF2, TRAF3, TRAF5 and TRAF6. Interacts (via cytoplasmic domain) with GAB2. Interacts (via cytoplasmic domain); with EEIG1 (via N-terminus); when in the presence of TNFSF11/RANKL. As to expression, ubiquitous expression with high levels in trabecular bone, thymus, small intestine, lung, brain and kidney. Weakly expressed in spleen and bone marrow.

It is found in the cell membrane. The protein resides in the membrane raft. Its function is as follows. Receptor for TNFSF11/RANKL/TRANCE/OPGL; essential for RANKL-mediated osteoclastogenesis. Its interaction with EEIG1 promotes osteoclastogenesis via facilitating the transcription of NFATC1 and activation of PLCG2. Involved in the regulation of interactions between T-cells and dendritic cells. The sequence is that of Tumor necrosis factor receptor superfamily member 11A (Tnfrsf11a) from Mus musculus (Mouse).